The chain runs to 123 residues: Small ribosomal subunit protein uS12 (123 aa).

Residues 1–29 (MPTINQLIRKKRQSSASRKKSPALQKCPQ) are disordered. The span at 8 to 21 (IRKKRQSSASRKKS) shows a compositional bias: basic residues. At Asp-89 the chain carries 3-methylthioaspartic acid.

Belongs to the universal ribosomal protein uS12 family. As to quaternary structure, part of the 30S ribosomal subunit. Contacts proteins S8 and S17. May interact with IF1 in the 30S initiation complex.

Functionally, with S4 and S5 plays an important role in translational accuracy. Interacts with and stabilizes bases of the 16S rRNA that are involved in tRNA selection in the A site and with the mRNA backbone. Located at the interface of the 30S and 50S subunits, it traverses the body of the 30S subunit contacting proteins on the other side and probably holding the rRNA structure together. The combined cluster of proteins S8, S12 and S17 appears to hold together the shoulder and platform of the 30S subunit. This is Small ribosomal subunit protein uS12 from Chlamydia abortus (strain DSM 27085 / S26/3) (Chlamydophila abortus).